A 467-amino-acid chain; its full sequence is Dynactin subunit 4 (467 aa).

N-acetylalanine is present on alanine 2. A Glycyl lysine isopeptide (Lys-Gly) (interchain with G-Cter in SUMO2) cross-link involves residue lysine 222. Threonine 414 is subject to Phosphothreonine.

This sequence belongs to the dynactin subunit 4 family. Subunit of dynactin, a multiprotein complex part of a tripartite complex with dynein and a adapter, such as BICDL1, BICD2 or HOOK3. The dynactin complex is built around ACTR1A/ACTB filament and consists of an actin-related filament composed of a shoulder domain, a pointed end and a barbed end. Its length is defined by its flexible shoulder domain. The soulder is composed of 2 DCTN1 subunits, 4 DCTN2 and 2 DCTN3. The 4 DCNT2 (via N-terminus) bind the ACTR1A filament and act as molecular rulers to determine the length. The pointed end is important for binding dynein-dynactin cargo adapters. Consists of 4 subunits: ACTR10, DCNT4, DCTN5 and DCTN6. The barbed end is composed of a CAPZA1:CAPZB heterodimers, which binds ACTR1A/ACTB filament and dynactin and stabilizes dynactin. Interacts with ATP7B, but not ATP7A, in a copper-dependent manner. Interacts with ANK2; this interaction is required for localization at costameres. Interacts with N4BP2L1.

Its subcellular location is the cytoplasm. It localises to the cytoskeleton. The protein resides in the microtubule organizing center. The protein localises to the centrosome. It is found in the stress fiber. Its subcellular location is the cell cortex. It localises to the myofibril. The protein resides in the sarcomere. Part of the dynactin complex that activates the molecular motor dynein for ultra-processive transport along microtubules. Together with dynein is involved in spindle assembly and cytokinesis. The polypeptide is Dynactin subunit 4 (DCTN4) (Sus scrofa (Pig)).